We begin with the raw amino-acid sequence, 537 residues long: Syncytin-2 (537 aa).

The signal sequence occupies residues Met1 to Ala15. The Extracellular segment spans residues Ala16–Lys478. The CXXC signature appears at Cys43–Cys46. Cystine bridges form between Cys43-Cys46, Cys43-Cys439, and Cys431-Cys438. Asn133, Asn146, Asn177, Asn220, Asn241, Asn247, Asn312, and Asn332 each carry an N-linked (GlcNAc...) asparagine glycan. A fusion peptide region spans residues Phe354–Ile374. Residues Leu414–Ile430 carry the CKS-17 motif. The short motif at Cys431–Cys439 is the CX6CC element. N-linked (GlcNAc...) asparagine glycosylation is present at Asn443. The chain crosses the membrane as a helical span at residues Trp479–Phe499. Over Gly500–Phe537 the chain is Cytoplasmic.

This sequence belongs to the gamma type-C retroviral envelope protein family. HERV class-I FRD env subfamily. In terms of assembly, the surface and transmembrane proteins form a heterodimer. They are attached by non-covalent interactions or by a labile interchain disulfide bond. Specific enzymatic cleavages in vivo yield the mature SU and TM proteins. In terms of processing, the CXXC motif is highly conserved across a broad range of retroviral envelope proteins. It is thought to participate in the formation of a labile disulfide bond possibly with the CX6CC motif present in the transmembrane protein.

Its subcellular location is the virion. It localises to the cell membrane. This endogenous retroviral envelope protein has retained its original fusogenic properties and participates in trophoblast fusion and the formation of a syncytium during placenta morphogenesis. The interaction with MFSD2A is apparently important for this process. Functionally, endogenous envelope proteins may have kept, lost or modified their original function during evolution but this one can still make pseudotypes with MLV, HIV-1 or SIV-1 virions and confer infectivity. Retroviral envelope proteins mediate receptor recognition and membrane fusion during early infection. The surface protein mediates receptor recognition, while the transmembrane protein anchors the envelope heterodimer to the viral membrane through one transmembrane domain. The other hydrophobic domain, called fusion peptide, mediates fusion of the viral membrane with the target cell membrane. This is Syncytin-2 (ERVFRD-1) from Macaca fascicularis (Crab-eating macaque).